We begin with the raw amino-acid sequence, 165 residues long: Large ribosomal subunit protein uL11 (165 aa).

Ser-38 carries the phosphoserine modification. Lys-40 is covalently cross-linked (Glycyl lysine isopeptide (Lys-Gly) (interchain with G-Cter in SUMO2)). A Glycyl lysine isopeptide (Lys-Gly) (interchain with G-Cter in ubiquitin) cross-link involves residue Lys-48. Lys-54 is subject to N6-acetyllysine. A Glycyl lysine isopeptide (Lys-Gly) (interchain with G-Cter in ubiquitin) cross-link involves residue Lys-83. At Ser-165 the chain carries Phosphoserine.

It belongs to the universal ribosomal protein uL11 family. As to quaternary structure, component of the large ribosomal subunit. Mature ribosomes consist of a small (40S) and a large (60S) subunit. The 40S subunit contains about 33 different proteins and 1 molecule of RNA (18S). The 60S subunit contains about 49 different proteins and 3 molecules of RNA (28S, 5.8S and 5S). Ubiquitinated at Lys-48 and Lys-83 by RNF14 and RNF25 in response to ribosome collisions (ribosome stalling).

Its subcellular location is the cytoplasm. Component of the large ribosomal subunit. The ribosome is a large ribonucleoprotein complex responsible for the synthesis of proteins in the cell. Binds directly to 26S ribosomal RNA. The sequence is that of Large ribosomal subunit protein uL11 (RPL12) from Bos taurus (Bovine).